Here is a 1226-residue protein sequence, read N- to C-terminus: AF4/FMR2 family member 3 (1226 aa).

Residues 24-37 show a composition bias toward basic and acidic residues; it reads RNALRRKERERRNQ. Disordered regions lie at residues 24-65, 116-164, 197-299, 323-496, and 523-728; these read RNAL…GDEL, SRAQ…RATQ, ERPP…GETN, KVEP…SNQY, and IKST…SINA. Over residues 42 to 52 the composition is skewed to polar residues; that stretch reads DDGTFNSSYSL. The segment covering 123–132 has biased composition (low complexity); sequence SSICSTTTST. 2 stretches are compositionally biased toward polar residues: residues 251–261 and 334–344; these read LKSSSETSVHC and KDSQLVSSGHN. A compositionally biased stretch (low complexity) spans 381-392; it reads QQAAQRTALRAL. Residues 396–408 are compositionally biased toward polar residues; that stretch reads AVVQQPNCRTSVP. Residues 409–445 show a composition bias toward low complexity; it reads SSKGSSSSSSSGSSSSSSDSESSSGSDSETESSSSES. The segment covering 485 to 496 has biased composition (polar residues); it reads QNESHGSESNQY. Over residues 523-533 the composition is skewed to basic and acidic residues; it reads IKSTCKEEQRP. 2 stretches are compositionally biased toward low complexity: residues 550 to 561 and 569 to 579; these read PPAAVAVAVSAA and CAPAENAPAPA. Residues 589–607 are compositionally biased toward basic and acidic residues; that stretch reads RRTERTSAGDGANCHRPEE. Residues 668–678 are compositionally biased toward low complexity; that stretch reads TESSSSSSSSD. Polar residues predominate over residues 692 to 705; it reads KAQTVAASASSGND. The residue at position 755 (Ser755) is a Phosphoserine. Disordered regions lie at residues 783–856, 879–964, and 1100–1138; these read PQEP…LSAN, PISP…RDCK, and AAQAPSPWGASGKSTGTPSPMSPNPSPASSVGSQGSLSN. Residues 830–842 show a composition bias toward basic and acidic residues; it reads REIKKSQGEKDSS. Positions 843–856 are enriched in polar residues; that stretch reads SRLATSTSNTLSAN. Ser881 carries the phosphoserine modification. Over residues 894–909 the composition is skewed to polar residues; it reads EDLTSSSRPNGNSLFT.

Belongs to the AF4 family. In terms of tissue distribution, preferentially expressed in lymphoid tissues, highest levels being found in the thymus.

It localises to the nucleus. In terms of biological role, putative transcription activator that may function in lymphoid development and oncogenesis. Binds, in vitro, to double-stranded DNA. The protein is AF4/FMR2 family member 3 of Homo sapiens (Human).